Here is a 407-residue protein sequence, read N- to C-terminus: Substance-P receptor (407 aa).

Residues Met1–Gln31 lie on the Extracellular side of the membrane. Asn14 and Asn18 each carry an N-linked (GlcNAc...) asparagine glycan. A helical transmembrane segment spans residues Ile32–Met54. Residues Trp55–Arg64 are Cytoplasmic-facing. The chain crosses the membrane as a helical span at residues Thr65 to Thr86. Residues Val87–Lys106 lie on the Extracellular side of the membrane. Cys105 and Cys180 are joined by a disulfide. The chain crosses the membrane as a helical span at residues Phe107 to Phe128. Topologically, residues Asp129–Lys148 are cytoplasmic. A helical membrane pass occupies residues Val149 to Ser169. Over Thr170–Lys194 the chain is Extracellular. The chain crosses the membrane as a helical span at residues Val195 to Val219. His197 is a CP-96345 binding site. Residues Gly220–Lys248 are Cytoplasmic-facing. The helical transmembrane segment at Met249–Leu270 threads the bilayer. The Extracellular portion of the chain corresponds to Pro271–Ile283. The helical transmembrane segment at Gln284–Leu308 threads the bilayer. At Asn309 to Ser407 the chain is on the cytoplasmic side. The S-palmitoyl cysteine moiety is linked to residue Cys322. Positions Ala364–Ser407 are disordered. Over residues Thr376–Ser407 the composition is skewed to polar residues.

Belongs to the G-protein coupled receptor 1 family. In terms of assembly, interacts with ARRB1.

The protein resides in the cell membrane. Functionally, this is a receptor for the tachykinin neuropeptide substance P. It is probably associated with G proteins that activate a phosphatidylinositol-calcium second messenger system. The rank order of affinity of this receptor to tachykinins is: substance P &gt; substance K &gt; neuromedin-K. This Homo sapiens (Human) protein is Substance-P receptor (TACR1).